Consider the following 300-residue polypeptide: Beta-lactamase (300 aa).

A signal peptide spans 1–29 (MTMFKTTFRQTATIAVSLISLLVSPMLWA). Catalysis depends on Ser-75, which acts as the Acyl-ester intermediate. 239-241 (KTG) provides a ligand contact to substrate.

This sequence belongs to the class-A beta-lactamase family. As to quaternary structure, monomer.

It catalyses the reaction a beta-lactam + H2O = a substituted beta-amino acid. Its function is as follows. Hydrolyzes broad-spectrum beta-lactam antibiotics. Active against cephalosporins such as cefuroxime and cefotaxime. This chain is Beta-lactamase (blaB), found in Proteus vulgaris.